The primary structure comprises 145 residues: Methylglyoxal synthase (145 aa).

The MGS-like domain occupies 1-145 (MNSKKKIALV…YYQKIRKDNF (145 aa)). Substrate contacts are provided by residues His-12, Lys-16, 38-41 (TGTT), and 58-59 (SG). The active-site Proton donor/acceptor is the Asp-64. A substrate-binding site is contributed by His-91.

This sequence belongs to the methylglyoxal synthase family.

It carries out the reaction dihydroxyacetone phosphate = methylglyoxal + phosphate. In terms of biological role, catalyzes the formation of methylglyoxal from dihydroxyacetone phosphate. This chain is Methylglyoxal synthase, found in Clostridium acetobutylicum (strain ATCC 824 / DSM 792 / JCM 1419 / IAM 19013 / LMG 5710 / NBRC 13948 / NRRL B-527 / VKM B-1787 / 2291 / W).